A 345-amino-acid polypeptide reads, in one-letter code: Phosphate acyltransferase (345 aa).

The protein belongs to the PlsX family. As to quaternary structure, homodimer. Probably interacts with PlsY.

It localises to the cytoplasm. The catalysed reaction is a fatty acyl-[ACP] + phosphate = an acyl phosphate + holo-[ACP]. Its pathway is lipid metabolism; phospholipid metabolism. In terms of biological role, catalyzes the reversible formation of acyl-phosphate (acyl-PO(4)) from acyl-[acyl-carrier-protein] (acyl-ACP). This enzyme utilizes acyl-ACP as fatty acyl donor, but not acyl-CoA. This is Phosphate acyltransferase from Wolbachia pipientis subsp. Culex pipiens (strain wPip).